Here is a 788-residue protein sequence, read N- to C-terminus: MEPIIALLIGNGGREHTIAWKLCESPLISKVYVAPGNGGTASNGAESKMENVNIGVCDFEQLVKFALDKDVNLVIPGPELPLVEGIEGHFRRVGIPCFGPSALAARMEGSKVFSKDFMHRNNIPTAVYKSFSNYDHAKSFLDTCTFDVVIKADGLAAGKGVIIPKTKKEAFEALESIMLNEEFGSAGKNVVIEELLEGEELSILTFSDGYTCRSLPPAQDHKRAFDGDKGPNTGGMGCYAPTPVASPKLLETVQSTIIQPTIDGMRHEGYPLVGILFTGLMLTPSGPRVLEYNVRFGDPETQAVLPLLESDLAEIILACVNHRLDAIDIVISRKFSCAVVCVAGGYPGPYNKGDIITFDALKDKNTRIFHAGTSIRDGNVVTNGGRVLAVEATGDSVEAAVRLAYEGVKTVHFDKMFYRKDIAHHALNPKRKTREILTYENSGVSVDNGNEFVQRIKDLVKSTRRPGADADIGGFGGIFDLKQAGWNDPLLVSATDGVGSKLLIALSLNKHDTVGIDLVAMNVNDLVVQGAEPLIFLDYFATGSLDLKVSTSFVEGVVKGCKQAGCALVGGETSEMPGLYHDGHYDANGTSVGAVSRDDILPKPESFSKGDILLGLASDGVHSNGYSLVRKIVEYSDLEYTSVCPWDKNVRLGDSLLIPTRIYVKPLLHVIRKNIVKGMAHITGGGLVENVPRMLPSHLNAIIDVDTWEVPEVFKWLKDAGNVPISDMARTFNMGIGMVVAVASEDAEETMKELTSVGETVYRIGQLVDKESSSERCHLVNLNKWETF.

The GARS stretch occupies residues 1–430 (MEPIIALLIG…DIAHHALNPK (430 aa)). The ATP-grasp domain occupies 115–321 (KDFMHRNNIP…LAEIILACVN (207 aa)). 141-202 (LDTCTFDVVI…EELLEGEELS (62 aa)) provides a ligand contact to ATP. The Mg(2+) site is built by Glu-291 and Asn-293. The interval 437–769 (LTYENSGVSV…TVYRIGQLVD (333 aa)) is AIRS.

This sequence in the N-terminal section; belongs to the GARS family. It in the C-terminal section; belongs to the AIR synthase family. The cofactor is Mg(2+). It depends on Mn(2+) as a cofactor.

The protein resides in the cytoplasm. It localises to the cytosol. The catalysed reaction is 5-phospho-beta-D-ribosylamine + glycine + ATP = N(1)-(5-phospho-beta-D-ribosyl)glycinamide + ADP + phosphate + H(+). It carries out the reaction 2-formamido-N(1)-(5-O-phospho-beta-D-ribosyl)acetamidine + ATP = 5-amino-1-(5-phospho-beta-D-ribosyl)imidazole + ADP + phosphate + H(+). It functions in the pathway purine metabolism; IMP biosynthesis via de novo pathway; 5-amino-1-(5-phospho-D-ribosyl)imidazole from N(2)-formyl-N(1)-(5-phospho-D-ribosyl)glycinamide: step 2/2. Its pathway is purine metabolism; IMP biosynthesis via de novo pathway; N(1)-(5-phospho-D-ribosyl)glycinamide from 5-phospho-alpha-D-ribose 1-diphosphate: step 2/2. Catalyzes the second and fifth step in the 'de novo' purine biosynthesis pathway; contains phosphoribosylamine--glycine ligase (GARS) and phosphoribosylformylglycinamidine cyclo-ligase (AIRS) activities. In Schizosaccharomyces pombe (strain 972 / ATCC 24843) (Fission yeast), this protein is Bifunctional purine biosynthetic protein ADE1.